The chain runs to 384 residues: 8-amino-7-oxononanoate synthase (384 aa).

R21 provides a ligand contact to substrate. 108–109 (GF) serves as a coordination point for pyridoxal 5'-phosphate. H133 serves as a coordination point for substrate. Residues S179, H207, and T233 each contribute to the pyridoxal 5'-phosphate site. An N6-(pyridoxal phosphate)lysine modification is found at K236. A substrate-binding site is contributed by T352.

This sequence belongs to the class-II pyridoxal-phosphate-dependent aminotransferase family. BioF subfamily. Homodimer. It depends on pyridoxal 5'-phosphate as a cofactor.

It carries out the reaction 6-carboxyhexanoyl-[ACP] + L-alanine + H(+) = (8S)-8-amino-7-oxononanoate + holo-[ACP] + CO2. It participates in cofactor biosynthesis; biotin biosynthesis. In terms of biological role, catalyzes the decarboxylative condensation of pimeloyl-[acyl-carrier protein] and L-alanine to produce 8-amino-7-oxononanoate (AON), [acyl-carrier protein], and carbon dioxide. The polypeptide is 8-amino-7-oxononanoate synthase (Shigella flexneri serotype 5b (strain 8401)).